Here is a 180-residue protein sequence, read N- to C-terminus: Cytochrome c oxidase assembly protein CtaG (180 aa).

The Cytoplasmic portion of the chain corresponds to 1-8; sequence MSKKSNKS. Residues 9 to 29 traverse the membrane as a helical; Signal-anchor for type II membrane protein segment; it reads LAFSLLGLIVSMVLLSFAAVP. Residues 30–180 are Periplasmic-facing; sequence LYNLFCKVTG…SFFKVRDVKK (151 aa).

Belongs to the COX11/CtaG family.

It is found in the cell inner membrane. In terms of biological role, exerts its effect at some terminal stage of cytochrome c oxidase synthesis, probably by being involved in the insertion of the copper B into subunit I. The protein is Cytochrome c oxidase assembly protein CtaG of Rickettsia bellii (strain RML369-C).